Consider the following 598-residue polypeptide: 4-coumarate--CoA ligase-like 6 (598 aa).

ATP-binding residues include S232, S233, G234, T235, T236, and K240. R318 is a binding site for CoA. An SBD1 region spans residues 320–389; that stretch reads DLAAAARAVE…TVFPSVQIVQ (70 aa). Residues G367, Q389, and T394 each contribute to the (E)-4-coumaroyl-AMP site. Q389, T394, D475, and R490 together coordinate ATP. The SBD2 stretch occupies residues 390-454; the sequence is SYGLTESTGP…IRGPVVMKGY (65 aa). Positions 492 and 496 each coordinate (E)-4-coumaroyl-AMP. The CoA site is built by K498 and G499. K581 lines the ATP pocket.

It belongs to the ATP-dependent AMP-binding enzyme family. It depends on Mg(2+) as a cofactor.

It carries out the reaction (E)-4-coumarate + ATP + CoA = (E)-4-coumaroyl-CoA + AMP + diphosphate. The enzyme catalyses (E)-4-coumarate + ATP + H(+) = (E)-4-coumaroyl-AMP + diphosphate. The catalysed reaction is (E)-4-coumaroyl-AMP + CoA = (E)-4-coumaroyl-CoA + AMP + H(+). In terms of biological role, carboxylate--CoA ligase that may use 4-coumarate as substrate. Follows a two-step reaction mechanism, wherein the carboxylate substrate first undergoes adenylation by ATP, followed by a thioesterification in the presence of CoA to yield the final CoA thioester. This Oryza sativa subsp. japonica (Rice) protein is 4-coumarate--CoA ligase-like 6 (4CLL6).